The following is a 225-amino-acid chain: UPF0173 metal-dependent hydrolase Aflv_0488 (225 aa).

It belongs to the UPF0173 family.

The protein is UPF0173 metal-dependent hydrolase Aflv_0488 of Anoxybacillus flavithermus (strain DSM 21510 / WK1).